The following is a 264-amino-acid chain: Small ribosomal subunit protein uS2 (264 aa).

Positions 228–264 (QLDAEDDYEDYDGSEYDDDYEETEYTDAVIPDEETEE) are disordered. Residues 230–264 (DAEDDYEDYDGSEYDDDYEETEYTDAVIPDEETEE) show a composition bias toward acidic residues.

This sequence belongs to the universal ribosomal protein uS2 family.

This chain is Small ribosomal subunit protein uS2, found in Nostoc punctiforme (strain ATCC 29133 / PCC 73102).